Reading from the N-terminus, the 146-residue chain is Transcriptional regulator MraZ (146 aa).

2 consecutive SpoVT-AbrB domains span residues 5–47 (EYYH…TITD) and 76–119 (SVQV…AKER).

The protein belongs to the MraZ family. Forms oligomers.

The protein localises to the cytoplasm. Its subcellular location is the nucleoid. This is Transcriptional regulator MraZ from Dictyoglomus turgidum (strain DSM 6724 / Z-1310).